Consider the following 274-residue polypeptide: Leucine-rich repeat-containing protein 10 (274 aa).

8 LRR repeats span residues 30 to 51 (LDRMVDLSGSQLRRFPLHVCSF), 52 to 74 (TELVKLYLSDNHLHSLPPDLAQL), 76 to 97 (NLQILALDFNNFKALPRVVCTL), 98 to 120 (KQLCILYLGNNKLCDLPDELSLL), 121 to 143 (QNLRTLWLESNCLTRLPDVVCEL), 145 to 166 (LLKTLHAGSNALRLLPGQLRRL), 167 to 189 (RELRTIWLSGNQLADFPSVLLRM), and 191 to 213 (FLEVIDVDRNSIRYFPSLAHLTN). The disordered stretch occupies residues 236-274 (RVGRWAEETPEPDPRKARRYALAKEENQEPPPPLLPSSS). The span at 239–250 (RWAEETPEPDPR) shows a compositional bias: basic and acidic residues. The segment covering 264-274 (EPPPPLLPSSS) has biased composition (pro residues).

Detected specifically in the heart.

It is found in the nucleus. Its function is as follows. May play important roles in cardiac development and/or cardiac function. The protein is Leucine-rich repeat-containing protein 10 (Lrrc10) of Mus musculus (Mouse).